Consider the following 272-residue polypeptide: B3 domain-containing protein Os10g0323000 (272 aa).

Positions 39–132 form a DNA-binding region, TF-B3 1; sequence RYGENRKHGQ…TLDLLILDKH (94 aa). Positions 139–171 are disordered; that stretch reads PPSKRDLKLKSKRSTHQDSKGHPSNTDPGPSRI. A compositionally biased stretch (basic and acidic residues) spans 141 to 159; sequence SKRDLKLKSKRSTHQDSKG. The TF-B3 2 DNA-binding region spans 180–272; it reads ESSANTQLLV…THLGVIVDIF (93 aa).

Its subcellular location is the nucleus. The sequence is that of B3 domain-containing protein Os10g0323000 from Oryza sativa subsp. japonica (Rice).